The chain runs to 323 residues: Mas-related G-protein coupled receptor member B4 (323 aa).

At 1–34 (MSPTTQAWSINNTVVKENYYTEILSCITTFNTLN) the chain is on the extracellular side. The N-linked (GlcNAc...) asparagine glycan is linked to asparagine 11. A helical membrane pass occupies residues 35–55 (FLIVIISVVGMAGNATVLWLL). Over 56–63 (GFHMHRNA) the chain is Cytoplasmic. A helical transmembrane segment spans residues 64–84 (FSVYVLNLAGADFLYLCAQTV). Residues 85 to 98 (YSLECVLQFDNSYF) lie on the Extracellular side of the membrane. The chain crosses the membrane as a helical span at residues 99–119 (YFLLTILMFNYLAGFCMIAAI). Topologically, residues 120-147 (STERCLSVTWPIWYHCQRPRHTSATVCA) are cytoplasmic. The helical transmembrane segment at 148–168 (LFWAFSLLLSLLLGQGCGFLF) threads the bilayer. Residues 169–180 (SKFDYSFCRYCN) lie on the Extracellular side of the membrane. The chain crosses the membrane as a helical span at residues 181–201 (FIATAFLIVIFMVLFVSSLAL). Residues 202 to 224 (LAKIICGSHRIPVTRFYVTIALT) lie on the Cytoplasmic side of the membrane. A helical membrane pass occupies residues 225–245 (VLVFIFFGLPIGICVFLLPWI). Residues 246 to 255 (HMMLSSFFYE) lie on the Extracellular side of the membrane. The chain crosses the membrane as a helical span at residues 256 to 276 (MVTLLSCVNSCANPIIYFFVG). Residues 277-323 (SIRHHRLQRQTLKLLLQRAMQDTPEEEGGERGPSQKSEDLEVVRCSS) are Cytoplasmic-facing. The disordered stretch occupies residues 298 to 323 (DTPEEEGGERGPSQKSEDLEVVRCSS). The segment covering 312–323 (KSEDLEVVRCSS) has biased composition (basic and acidic residues).

The protein belongs to the G-protein coupled receptor 1 family. Mas subfamily. In terms of tissue distribution, expressed strongly in newborn dorsal root ganglia, adult dorsal root ganglia and trigeminal ganlia.

Its subcellular location is the membrane. Functionally, orphan receptor. Probably involved in the function of nociceptive neurons. May regulate nociceptor function and/or development, including the sensation or modulation of pain. This chain is Mas-related G-protein coupled receptor member B4 (Mrgprb4), found in Rattus norvegicus (Rat).